The following is a 303-amino-acid chain: Taste receptor type 2 member 13 (303 aa).

Topologically, residues 1–7 (MESALPS) are extracellular. Residues 8–28 (IFTLVIIAEFIIGNLSNGFIV) form a helical membrane-spanning segment. The Cytoplasmic segment spans residues 29 to 55 (LINCIDWVSKRELSSVDKLLIILAISR). Residues 56–76 (IGLIWEILVSWFLALHSLAIF) traverse the membrane as a helical segment. The Extracellular segment spans residues 77-85 (VSGTGLRIM). The chain crosses the membrane as a helical span at residues 86–106 (IFSWIVSNHFNLWLATILSIF). The Cytoplasmic portion of the chain corresponds to 107–128 (YLLKIASFSSPAFLYLKRRVNK). Residues 129-149 (VILMILLGTLVFLFLNLIQIN) traverse the membrane as a helical segment. Residues 150–184 (MLIKDWLDRYERNTTWNFSMSDFETFSVSVRFTMT) are Extracellular-facing. Asparagine 162 and asparagine 166 each carry an N-linked (GlcNAc...) asparagine glycan. The helical transmembrane segment at 185-205 (MFSLTPFTVAFISFLLLVFSL) threads the bilayer. The Cytoplasmic segment spans residues 206–232 (QKHLQKMQLNYKGHRDPRTKVHTNALK). A helical membrane pass occupies residues 233–253 (IVISFLLFYASFFLSILISWI). The Extracellular segment spans residues 254 to 261 (SELYQNTV). Residues 262 to 282 (IYMLCETIGAFYPSSHSFLLI) traverse the membrane as a helical segment. Topologically, residues 283–303 (LGNAKLRQAFLLVAAKVWAKR) are cytoplasmic.

This sequence belongs to the G-protein coupled receptor T2R family.

It localises to the membrane. Receptor that may play a role in the perception of bitterness and is gustducin-linked. May play a role in sensing the chemical composition of the gastrointestinal content. The activity of this receptor may stimulate alpha gustducin, mediate PLC-beta-2 activation and lead to the gating of TRPM5. The chain is Taste receptor type 2 member 13 (TAS2R13) from Pan paniscus (Pygmy chimpanzee).